The primary structure comprises 342 residues: Cell division protein ZipA (342 aa).

Residues 1–6 lie on the Periplasmic side of the membrane; it reads MEDLQL. The chain crosses the membrane as a helical span at residues 7 to 27; sequence VLFILGAIAIVAVLVHGFWSI. At 28–342 the chain is on the cytoplasmic side; it reads RRQQPKSLKD…DYLHRIRANA (315 aa). The disordered stretch occupies residues 33 to 57; it reads KSLKDSPMGNFYKQQADKESPPKRV. Basic and acidic residues predominate over residues 47–57; sequence QADKESPPKRV.

It belongs to the ZipA family. In terms of assembly, interacts with FtsZ via their C-terminal domains.

It localises to the cell inner membrane. In terms of biological role, essential cell division protein that stabilizes the FtsZ protofilaments by cross-linking them and that serves as a cytoplasmic membrane anchor for the Z ring. Also required for the recruitment to the septal ring of downstream cell division proteins. In Shewanella sp. (strain W3-18-1), this protein is Cell division protein ZipA.